Here is a 566-residue protein sequence, read N- to C-terminus: Mediator of RNA polymerase II transcription subunit 1 (566 aa).

Phosphoserine is present on S155. Residues 361–425 (TPSSNSNSSE…TNKSKRPSIT (65 aa)) form a disordered region. The span at 410–421 (RRRRSSTNKSKR) shows a compositional bias: basic residues. Residue S423 is modified to Phosphoserine.

The protein belongs to the Mediator complex subunit 1 family. In terms of assembly, component of the Mediator complex, which is composed of at least 21 subunits that form three structurally distinct submodules. The Mediator head module contains MED6, MED8, MED11, SRB4/MED17, SRB5/MED18, ROX3/MED19, SRB2/MED20 and SRB6/MED22, the middle module contains MED1, MED4, NUT1/MED5, MED7, CSE2/MED9, NUT2/MED10, SRB7/MED21 and SOH1/MED31, and the tail module contains MED2, PGD1/MED3, RGR1/MED14, GAL11/MED15 and SIN4/MED16. The head and the middle modules interact directly with RNA polymerase II, whereas the elongated tail module interacts with gene-specific regulatory proteins. MED1 interacts directly with MED4 and MED7.

Its subcellular location is the nucleus. Its function is as follows. Component of the Mediator complex, a coactivator involved in the regulated transcription of nearly all RNA polymerase II-dependent genes. Mediator functions as a bridge to convey information from gene-specific regulatory proteins to the basal RNA polymerase II transcription machinery. The Mediator complex, having a compact conformation in its free form, is recruited to promoters by direct interactions with regulatory proteins and serves for the assembly of a functional preinitiation complex with RNA polymerase II and the general transcription factors. The Mediator complex unfolds to an extended conformation and partially surrounds RNA polymerase II, specifically interacting with the unphosphorylated form of the C-terminal domain (CTD) of RNA polymerase II. The Mediator complex dissociates from the RNA polymerase II holoenzyme and stays at the promoter when transcriptional elongation begins. This chain is Mediator of RNA polymerase II transcription subunit 1 (MED1), found in Saccharomyces cerevisiae (strain ATCC 204508 / S288c) (Baker's yeast).